The following is a 158-amino-acid chain: NAD(P)H-quinone oxidoreductase subunit J, chloroplastic (158 aa).

It belongs to the complex I 30 kDa subunit family. As to quaternary structure, NDH is composed of at least 16 different subunits, 5 of which are encoded in the nucleus.

It localises to the plastid. The protein resides in the chloroplast thylakoid membrane. The enzyme catalyses a plastoquinone + NADH + (n+1) H(+)(in) = a plastoquinol + NAD(+) + n H(+)(out). The catalysed reaction is a plastoquinone + NADPH + (n+1) H(+)(in) = a plastoquinol + NADP(+) + n H(+)(out). In terms of biological role, NDH shuttles electrons from NAD(P)H:plastoquinone, via FMN and iron-sulfur (Fe-S) centers, to quinones in the photosynthetic chain and possibly in a chloroplast respiratory chain. The immediate electron acceptor for the enzyme in this species is believed to be plastoquinone. Couples the redox reaction to proton translocation, and thus conserves the redox energy in a proton gradient. This chain is NAD(P)H-quinone oxidoreductase subunit J, chloroplastic, found in Citrus sinensis (Sweet orange).